Here is a 1234-residue protein sequence, read N- to C-terminus: Coiled-coil domain-containing protein CG32809 (1234 aa).

Residues methionine 1 to serine 11 show a composition bias toward basic and acidic residues. Disordered regions lie at residues methionine 1–glutamine 88, lysine 107–aspartate 129, and lysine 330–glutamate 350. Over residues alanine 12–serine 25 the composition is skewed to low complexity. The span at glycine 55–arginine 69 shows a compositional bias: basic and acidic residues. Residues histidine 412 to asparagine 436 are a coiled coil. The disordered stretch occupies residues aspartate 498–leucine 548. 2 coiled-coil regions span residues glutamate 565 to glutamine 594 and threonine 630 to asparagine 666. Disordered stretches follow at residues glutamate 754–glycine 793, isoleucine 815–alanine 852, leucine 928–glutamine 1011, and serine 1028–asparagine 1070. 5 stretches are compositionally biased toward low complexity: residues glutamine 817–glutamine 837, threonine 952–serine 965, threonine 993–serine 1004, serine 1028–alanine 1039, and valine 1046–serine 1068. Residues valine 1077–lysine 1105 are a coiled coil.

The sequence is that of Coiled-coil domain-containing protein CG32809 from Drosophila melanogaster (Fruit fly).